The sequence spans 365 residues: Dihydroorotate dehydrogenase (quinone) (365 aa).

FMN-binding positions include 61–65 (AGFDK) and Ser-85. Lys-65 is a binding site for substrate. 110–114 (NRMGF) lines the substrate pocket. Residues Asn-139 and Asn-170 each coordinate FMN. Asn-170 contributes to the substrate binding site. Ser-173 acts as the Nucleophile in catalysis. Substrate is bound at residue Asn-175. Lys-214 and Ser-242 together coordinate FMN. 243–244 (NT) lines the substrate pocket. FMN-binding positions include Gly-266, Gly-295, and 316-317 (YS).

The protein belongs to the dihydroorotate dehydrogenase family. Type 2 subfamily. In terms of assembly, monomer. It depends on FMN as a cofactor.

It is found in the cell membrane. The enzyme catalyses (S)-dihydroorotate + a quinone = orotate + a quinol. Its pathway is pyrimidine metabolism; UMP biosynthesis via de novo pathway; orotate from (S)-dihydroorotate (quinone route): step 1/1. Its function is as follows. Catalyzes the conversion of dihydroorotate to orotate with quinone as electron acceptor. The sequence is that of Dihydroorotate dehydrogenase (quinone) from Bradyrhizobium diazoefficiens (strain JCM 10833 / BCRC 13528 / IAM 13628 / NBRC 14792 / USDA 110).